A 141-amino-acid chain; its full sequence is Large ribosomal subunit protein uL11 (141 aa).

It belongs to the universal ribosomal protein uL11 family. Part of the ribosomal stalk of the 50S ribosomal subunit. Interacts with L10 and the large rRNA to form the base of the stalk. L10 forms an elongated spine to which L12 dimers bind in a sequential fashion forming a multimeric L10(L12)X complex. Post-translationally, one or more lysine residues are methylated.

Its function is as follows. Forms part of the ribosomal stalk which helps the ribosome interact with GTP-bound translation factors. The polypeptide is Large ribosomal subunit protein uL11 (Clostridioides difficile (strain 630) (Peptoclostridium difficile)).